Reading from the N-terminus, the 206-residue chain is Protein Nef (206 aa).

Glycine 2 carries the N-myristoyl glycine; by host lipid modification. At serine 6 the chain carries Phosphoserine; by host. The interval 62 to 65 (EDED) is acidic; interacts with host PACS1 and PACS2; stabilizes the interaction of NEF/MHC-I with host AP1M1; necessary for MHC-I internalization. The SH3-binding; interaction with Src family tyrosine kinases stretch occupies residues 69 to 78 (PVRPQVPLRP). The PxxP; stabilizes the interaction of NEF/MHC-I with host AP1M1; necessary for MHC-I internalization signature appears at 72 to 75 (PQVP). The mediates dimerization, Nef-PTE1 interaction stretch occupies residues 108–124 (EILDLWVYHTQGFFPDW). The segment at 148 to 180 (VDPREVEEATEGENNCLLHPVNQHGMEDEHREV) is binding to ATP6V1H. The Dileucine internalization motif; necessary for CD4 internalization motif lies at 164–165 (LL). The Diacidic; necessary for CD4 internalization motif lies at 174-175 (ED).

The protein belongs to the lentivirus primate group Nef protein family. Monomer; cytosolic form. Homodimer; membrane bound form. Interacts with Nef associated p21-activated kinase (PAK2); this interaction activates PAK2. Associates with the Nef-MHC-I-AP1 complex; this complex is required for MHC-I internalization. Interacts (via C-terminus) with host PI3-kinase. Interacts with host PACS1; this interaction seems to be weak. Interacts with host PACS2. Interacts with host LCK and MAPK3; these interactions inhibit the kinase activity of the latter. Interacts with host ATP6V1H; this interaction may play a role in CD4 endocytosis. Associates with the CD4-Nef-AP2 complex; this complex is required for CD4 internalization. Interacts with host AP2 subunit alpha and AP2 subunit sigma2. Interacts with TCR-zeta chain; this interaction up-regulates the Fas ligand (FasL) surface expression. Interacts with host HCK, LYN, and SRC; these interactions activate the Src family kinases. Interacts with MAP3K5; this interaction inhibits the Fas and TNFR-mediated death signals. Interacts with beta-COP and PTE1. Interacts with human RACK1; this increases Nef phosphorylation by PKC. Interacts with TP53; this interaction decreases the half-life of TP53, protecting the infected cell against p53-mediated apoptosis. The virion-associated Nef proteins are cleaved by the viral protease to release the soluble C-terminal core protein. Nef is probably cleaved concomitantly with viral structural proteins on maturation of virus particles. Post-translationally, myristoylated. In terms of processing, phosphorylated on serine residues, probably by host PKCdelta and theta.

The protein resides in the host cell membrane. The protein localises to the virion. It localises to the secreted. Its subcellular location is the host Golgi apparatus membrane. Its function is as follows. Factor of infectivity and pathogenicity, required for optimal virus replication. Alters numerous pathways of T-lymphocyte function and down-regulates immunity surface molecules in order to evade host defense and increase viral infectivity. Alters the functionality of other immunity cells, like dendritic cells, monocytes/macrophages and NK cells. Functionally, in infected CD4(+) T-lymphocytes, down-regulates the surface MHC-I, mature MHC-II, CD4, CD28, CCR5 and CXCR4 molecules. Mediates internalization and degradation of host CD4 through the interaction of with the cytoplasmic tail of CD4, the recruitment of AP-2 (clathrin adapter protein complex 2), internalization through clathrin coated pits, and subsequent transport to endosomes and lysosomes for degradation. Diverts host MHC-I molecules to the trans-Golgi network-associated endosomal compartments by an endocytic pathway to finally target them for degradation. MHC-I down-regulation may involve AP-1 (clathrin adapter protein complex 1) or possibly Src family kinase-ZAP70/Syk-PI3K cascade recruited by PACS2. In consequence infected cells are masked for immune recognition by cytotoxic T-lymphocytes. Decreasing the number of immune receptors also prevents reinfection by more HIV particles (superinfection). Down-regulates host SERINC3 and SERINC5 thereby excluding these proteins from the viral particles. Virion infectivity is drastically higher when SERINC3 or SERINC5 are excluded from the viral envelope, because these host antiviral proteins impair the membrane fusion event necessary for subsequent virion penetration. Bypasses host T-cell signaling by inducing a transcriptional program nearly identical to that of anti-CD3 cell activation. Interaction with TCR-zeta chain up-regulates the Fas ligand (FasL). Increasing surface FasL molecules and decreasing surface MHC-I molecules on infected CD4(+) cells send attacking cytotoxic CD8+ T-lymphocytes into apoptosis. In terms of biological role, plays a role in optimizing the host cell environment for viral replication without causing cell death by apoptosis. Protects the infected cells from apoptosis in order to keep them alive until the next virus generation is ready to strike. Inhibits the Fas and TNFR-mediated death signals by blocking MAP3K5/ASK1. Decreases the half-life of TP53, protecting the infected cell against p53-mediated apoptosis. Inhibits the apoptotic signals regulated by the Bcl-2 family proteins through the formation of a Nef/PI3-kinase/PAK2 complex that leads to activation of PAK2 and induces phosphorylation of host BAD. Its function is as follows. Extracellular Nef protein targets CD4(+) T-lymphocytes for apoptosis by interacting with CXCR4 surface receptors. In Homo sapiens (Human), this protein is Protein Nef.